Reading from the N-terminus, the 1591-residue chain is Dicer-like protein 1 (1591 aa).

Basic and acidic residues-rich tracts occupy residues 1–20 (MEVHDGLKSPDKAAKSRYDD) and 41–52 (SKPRKISERKRA). The disordered stretch occupies residues 1–52 (MEVHDGLKSPDKAAKSRYDDDRIDQDSEDEAVRLVANPDPSKPRKISERKRA). One can recognise a Helicase ATP-binding domain in the interval 115–298 (LFERAKQKNT…SYERATHELE (184 aa)). Residue 128–135 (LDTGTGKT) coordinates ATP. A DEAH box motif is present at residues 242–245 (DEAH). Positions 439 to 607 (KLIEILAECF…CLSLPKDRIM (169 aa)) constitute a Helicase C-terminal domain. One can recognise a Dicer dsRNA-binding fold domain in the interval 639–729 (SLVVLAEFVA…KSTLAKVLPA (91 aa)). Residues 888–1012 (TTTDRVPYNF…LVLETLLISQ (125 aa)) form the PAZ domain. 2 consecutive RNase III domains span residues 1050–1190 (IDIA…LTAQ) and 1243–1406 (CSQI…VDTG). Mg(2+) is bound by residues glutamate 1283, aspartate 1392, and glutamate 1395. The DRBM domain maps to 1440–1514 (THITSIITTQ…AKQAVAIYED (75 aa)). Zn(2+) contacts are provided by cysteine 1452, histidine 1485, cysteine 1526, and cysteine 1528.

It belongs to the helicase family. Dicer subfamily. The cofactor is Mg(2+). Mn(2+) is required as a cofactor.

In terms of biological role, dicer-like endonuclease which seems not to be involved in cleaving double-stranded RNA in the RNA interference (RNAi) pathway, contrary to its DCL2 counterpart. In Pyricularia oryzae (strain 70-15 / ATCC MYA-4617 / FGSC 8958) (Rice blast fungus), this protein is Dicer-like protein 1 (DCL1).